Consider the following 759-residue polypeptide: MAKSLLLVLCFALVTTLGWGYSAPPTGTTEPPDVQTVAPTEDETLQNEADNQENVLSQLLGDYDKVKAVSEGSDCQCKCVVRPLGRDACQRVNAGTSRKEDFYTVETITSGPSCKCACVAPPSALNPCEGDFRLQKLREADSRDLKLSTIIDMLEGAFYGLDLLKLHSVTTKLVGRVDKLEEEISKNLTKENEQIREDVEEIRTEMNKRGKENCSNNILDSIPDIRSALQRDAAAAYTHPEYEERFLQEETVSQQIKSIKLLQTRPLAPPEVVKPQRPLQRQVHLRGRPASRPTVIRGITYYKAKDPEEENDIEEHQDEFFSGEHGMDLLIEDQLLRHNQLLTSATRRPAATGRSAAVTADAGTTSAGTPTTALPSARLPASTAAPSTPDPAVSASVEQFSTPLPTTSVSPDPTEEAVPTPFTQVPATTVAHTATQQPPASAPPSAAPEDAFVEATHTAPVPPPPVRTDSPGKDSTARQGTVPPGPTLSPEEEDDIRNVIGRCKDTLSTITGPITQNTYGRNEGAWMKDPLAKDERIYVTNYYYGNTLVEFRNLENFKQGRWSNSYKLPYSWIGTGHVVYNGAFYYNRAFTRNIIKYDLKQRYVAAWAMLHDVAYEEATPWRWQGHSDVDFAVDENGLWLIYPALDDEGFSQEVIVLSKLNAVDLSTQKETTWRTGLRRNLYGNCFVICGVLYAVDSHNQRNANISYAFDTHTNTQIVPRLLFENEYSYTTQIDYNPKDRLLYAWDNGHQVTYHVIFAY.

A signal peptide spans 1–20 (MAKSLLLVLCFALVTTLGWG). 2 coiled-coil regions span residues 40–68 (TEDETLQNEADNQENVLSQLLGDYDKVKA) and 179–209 (KLEEEISKNLTKENEQIREDVEEIRTEMNKR). Residues N187 and N213 are each glycosylated (N-linked (GlcNAc...) asparagine). Disordered stretches follow at residues 346-396 (TRRP…VSAS) and 456-494 (THTAPVPPPPVRTDSPGKDSTARQGTVPPGPTLSPEEED). Positions 356–396 (AAVTADAGTTSAGTPTTALPSARLPASTAAPSTPDPAVSAS) are enriched in low complexity. The 258-residue stretch at 502-759 (RCKDTLSTIT…QVTYHVIFAY (258 aa)) folds into the Olfactomedin-like domain. C503 and C689 are disulfide-bonded. N-linked (GlcNAc...) asparagine glycosylation occurs at N704.

As to quaternary structure, homodimer. Binds to heparin and chondroitin sulfate E. In terms of processing, O-glycosylated and N-glycosylated.

Its subcellular location is the secreted. This chain is Olfactomedin-like protein 2B (OLFML2B), found in Bos taurus (Bovine).